The chain runs to 104 residues: MTRPWRLLTDGLEVRVRATPRGGRDAVEGIETRADGLPVLKVRVRAAPEDGAANAAIRAVLAEALGCPARAVTLAAGATARVKLFRVAGDGQALAARIGALLGP.

Belongs to the UPF0235 family.

This is UPF0235 protein M446_3939 from Methylobacterium sp. (strain 4-46).